Reading from the N-terminus, the 1337-residue chain is Nucleoporin POM152 (1337 aa).

Residues 1–48 (MEHRYNVFNDTPRGNHWMGSSVSGSPRPSYSSRPNVNTTRRFQYSDDE) are disordered. Topologically, residues 1–110 (MEHRYNVFND…TDVLEISKQR (110 aa)) are cytoplasmic. Residues 1–175 (MEHRYNVFND…SFNIPRLTFK (175 aa)) form a pore side region. Over residues 19 to 37 (GSSVSGSPRPSYSSRPNVN) the composition is skewed to low complexity. Ser45 and Ser60 each carry phosphoserine. Residues 111–131 (TFAVILFLIIQCYKIYDLVIL) traverse the membrane as a helical segment. Over 132–148 (KSGLPLSGLLFKNYRFN) the chain is Perinuclear space. The chain crosses the membrane as a helical span at residues 149-169 (FISKYFIIDSFFLYVLPSFNI). The Cytoplasmic segment spans residues 170 to 172 (PRL). A helical membrane pass occupies residues 173 to 193 (TFKPWVVYLQILAMLLLNIFI). Topologically, residues 194 to 1337 (SSDHEFVLIS…FAKNDLFFNN (1144 aa)) are perinuclear space. Residues 196–1337 (DHEFVLISLI…FAKNDLFFNN (1142 aa)) form a cisternal side region. Asn280 carries N-linked (GlcNAc...) asparagine glycosylation. Tandem repeats lie at residues 390-413 (DRCI…KLAY), 626-650 (DQCV…YYNT), 732-755 (KLCL…TLTY), 836-859 (KIKH…TVKF), 943-966 (EVCQ…ILEY), 1058-1077 (FLEP…SITF), 1157-1178 (EYCV…MIKY), and 1253-1276 (DIRE…SLTY). The segment at 390–1276 (DRCIGDSDNV…EGTPPFSLTY (887 aa)) is 8 X 24 AA approximate repeats.

As to quaternary structure, component of the nuclear pore complex (NPC). NPC constitutes the exclusive means of nucleocytoplasmic transport. NPCs allow the passive diffusion of ions and small molecules and the active, nuclear transport receptor-mediated bidirectional transport of macromolecules such as proteins, RNAs, ribonucleoparticles (RNPs), and ribosomal subunits across the nuclear envelope. Due to its 8-fold rotational symmetry, all subunits are present with 8 copies or multiples thereof. Interacts with NUP188. Post-translationally, the N-terminus is blocked. In terms of processing, phosphorylated by CDC28.

The protein localises to the nucleus. It localises to the nuclear pore complex. The protein resides in the nucleus membrane. In terms of biological role, functions as a component of the nuclear pore complex (NPC). NPC components, collectively referred to as nucleoporins (NUPs), can play the role of both NPC structural components and of docking or interaction partners for transiently associated nuclear transport factors. POM152 is important for the de novo assembly of NPCs. The sequence is that of Nucleoporin POM152 (POM152) from Saccharomyces cerevisiae (strain ATCC 204508 / S288c) (Baker's yeast).